The primary structure comprises 72 residues: Kappa-conotoxin PVIIA (72 aa).

The N-terminal stretch at 1–22 (MKLTCVVIVVVLFLTACQLITA) is a signal peptide. The propeptide occupies 23 to 45 (DDSRRTQKHRALRSTTKLSLSTR). Intrachain disulfides connect cysteine 46–cysteine 61, cysteine 53–cysteine 65, and cysteine 60–cysteine 71. A 4-hydroxyproline modification is found at proline 49.

This sequence belongs to the conotoxin O1 superfamily. Post-translationally, this toxin is not amidated at the C-terminal Val residue. Expressed by the venom duct.

Its subcellular location is the secreted. Functionally, kappa-conotoxins bind and inhibit voltage-gated potassium channels (Kv). This toxin inhibits the drosophila Shaker channel (IC(50)=57-80 nM). In vivo, when tested in fish, this toxin induces hyperactivity, followed by continuous contraction and extension of major fins, without immobilization or death. Injection of this peptide together with the delta-conotoxin PVIA causes the sudden tetanus of prey (STOP) syndrome, which is a single, lethal 'fin-pop' in envenomed fish. When tested in mice, induces hyperactivity. This chain is Kappa-conotoxin PVIIA, found in Conus purpurascens (Purple cone).